Consider the following 257-residue polypeptide: Glucosamine-6-phosphate deaminase (257 aa).

Residue D64 is the Proton acceptor; for enolization step of the active site. The active-site For ring-opening step is N133. The active-site Proton acceptor; for ring-opening step is the H135. E140 functions as the For ring-opening step in the catalytic mechanism.

This sequence belongs to the glucosamine/galactosamine-6-phosphate isomerase family. NagB subfamily.

It carries out the reaction alpha-D-glucosamine 6-phosphate + H2O = beta-D-fructose 6-phosphate + NH4(+). The protein operates within amino-sugar metabolism; N-acetylneuraminate degradation; D-fructose 6-phosphate from N-acetylneuraminate: step 5/5. Catalyzes the reversible isomerization-deamination of glucosamine 6-phosphate (GlcN6P) to form fructose 6-phosphate (Fru6P) and ammonium ion. This chain is Glucosamine-6-phosphate deaminase, found in Corynebacterium urealyticum (strain ATCC 43042 / DSM 7109).